Consider the following 225-residue polypeptide: ATP synthase F(0) complex subunit a (225 aa).

Helical transmembrane passes span 10–30, 69–89, 96–116, 135–155, 168–188, and 194–214; these read PSLL…ILLL, LILI…LLPY, QLSM…LIGL, LLIP…PIAL, LLIQ…PPLS, and VLIL…YVFV.

The protein belongs to the ATPase A chain family. As to quaternary structure, component of the ATP synthase complex composed at least of ATP5F1A/subunit alpha, ATP5F1B/subunit beta, ATP5MC1/subunit c (homooctomer), MT-ATP6/subunit a, MT-ATP8/subunit 8, ATP5ME/subunit e, ATP5MF/subunit f, ATP5MG/subunit g, ATP5MK/subunit k, ATP5MJ/subunit j, ATP5F1C/subunit gamma, ATP5F1D/subunit delta, ATP5F1E/subunit epsilon, ATP5PF/subunit F6, ATP5PB/subunit b, ATP5PD/subunit d, ATP5PO/subunit OSCP. ATP synthase complex consists of a soluble F(1) head domain (subunits alpha(3) and beta(3)) - the catalytic core - and a membrane F(0) domain - the membrane proton channel (subunits c, a, 8, e, f, g, k and j). These two domains are linked by a central stalk (subunits gamma, delta, and epsilon) rotating inside the F1 region and a stationary peripheral stalk (subunits F6, b, d, and OSCP). Interacts with DNAJC30; interaction is direct.

It localises to the mitochondrion inner membrane. The catalysed reaction is H(+)(in) = H(+)(out). Subunit a, of the mitochondrial membrane ATP synthase complex (F(1)F(0) ATP synthase or Complex V) that produces ATP from ADP in the presence of a proton gradient across the membrane which is generated by electron transport complexes of the respiratory chain. ATP synthase complex consist of a soluble F(1) head domain - the catalytic core - and a membrane F(1) domain - the membrane proton channel. These two domains are linked by a central stalk rotating inside the F(1) region and a stationary peripheral stalk. During catalysis, ATP synthesis in the catalytic domain of F(1) is coupled via a rotary mechanism of the central stalk subunits to proton translocation. With the subunit c (ATP5MC1), forms the proton-conducting channel in the F(0) domain, that contains two crucial half-channels (inlet and outlet) that facilitate proton movement from the mitochondrial intermembrane space (IMS) into the matrix. Protons are taken up via the inlet half-channel and released through the outlet half-channel, following a Grotthuss mechanism. This Alligator mississippiensis (American alligator) protein is ATP synthase F(0) complex subunit a.